The primary structure comprises 192 residues: NF-kappa-B inhibitor-interacting Ras-like protein 1 (192 aa).

11–18 provides a ligand contact to GTP; that stretch reads GLLSVGKT. An Effector region motif is present at residues 35–43; sequence DCETMEDVY. Residues 58 to 93 form an interactions with NFKBIA and NFKBIB region; that stretch reads HLYDTRGLQEGVELPKHYFSFADGFVLVYSVNNLES. GTP-binding positions include 61–65 and 120–123; these read DTRGL and NKID. Residues 168–192 form a disordered region; it reads LSQPQSKSSFPLPGRKNKGNSNSEN.

The protein belongs to the small GTPase superfamily. Ras family. KappaB-Ras subfamily. In terms of assembly, interacts with both NF-kappa-B inhibitor alpha (NFKBIA) and beta (NFKBIB) in vitro. However, it probably only interacts with NFKBIB in vivo. Forms a complex with NFKBIB and NF-kappa-B heterodimer (p50/NFKB1 and p65/RELA). Also interacts with c-Rel (REL). In terms of tissue distribution, widely expressed.

The protein resides in the cytoplasm. In terms of biological role, atypical Ras-like protein that acts as a potent regulator of NF-kappa-B activity by preventing the degradation of NF-kappa-B inhibitor beta (NFKBIB) by most signals, explaining why NFKBIB is more resistant to degradation. May act by blocking phosphorylation of NFKBIB and mediating cytoplasmic retention of p65/RELA NF-kappa-B subunit. It is unclear whether it acts as a GTPase. Both GTP- and GDP-bound forms block phosphorylation of NFKBIB. The sequence is that of NF-kappa-B inhibitor-interacting Ras-like protein 1 (NKIRAS1) from Homo sapiens (Human).